A 353-amino-acid polypeptide reads, in one-letter code: Farnesyl pyrophosphate synthase (353 aa).

Isopentenyl diphosphate contacts are provided by Lys-57, Arg-60, and Gln-96. Position 57 is an N6-(2-hydroxyisobutyryl)lysine; alternate (Lys-57). Lys-57 carries the N6-acetyllysine; alternate modification. 2 residues coordinate Mg(2+): Asp-103 and Asp-107. Arg-112 serves as a coordination point for dimethylallyl diphosphate. Arg-113 contacts isopentenyl diphosphate. Dimethylallyl diphosphate is bound by residues Lys-200, Thr-201, Gln-240, Lys-257, and Lys-266.

It belongs to the FPP/GGPP synthase family. Homodimer. Interacts with RSAD2. Interacts with bovine leukemia virus (BLV) protein G4. The cofactor is Mg(2+).

It localises to the cytoplasm. It carries out the reaction isopentenyl diphosphate + dimethylallyl diphosphate = (2E)-geranyl diphosphate + diphosphate. The catalysed reaction is isopentenyl diphosphate + (2E)-geranyl diphosphate = (2E,6E)-farnesyl diphosphate + diphosphate. The protein operates within isoprenoid biosynthesis; farnesyl diphosphate biosynthesis; farnesyl diphosphate from geranyl diphosphate and isopentenyl diphosphate: step 1/1. It functions in the pathway isoprenoid biosynthesis; geranyl diphosphate biosynthesis; geranyl diphosphate from dimethylallyl diphosphate and isopentenyl diphosphate: step 1/1. Inactivated by interferon-induced RSAD2. This inactivation may result of disruption of lipid rafts at the plasma membrane, and thus have an antiviral effect since many enveloped viruses need lipid rafts to bud efficiently out of the cell. In terms of biological role, key enzyme in isoprenoid biosynthesis which catalyzes the formation of farnesyl diphosphate (FPP), a precursor for several classes of essential metabolites including sterols, dolichols, carotenoids, and ubiquinones. FPP also serves as substrate for protein farnesylation and geranylgeranylation. Catalyzes the sequential condensation of isopentenyl pyrophosphate with the allylic pyrophosphates, dimethylallyl pyrophosphate, and then with the resultant geranylpyrophosphate to the ultimate product farnesyl pyrophosphate. The polypeptide is Farnesyl pyrophosphate synthase (FDPS) (Bos taurus (Bovine)).